We begin with the raw amino-acid sequence, 198 residues long: Single-stranded DNA cytosine deaminase (198 aa).

Positions 1–30 (MDSLLMKQKKFLYHFKNVRWAKGRHETYLC) match the Bipartite nuclear localization signal motif. The tract at residues 2-26 (DSLLMKQKKFLYHFKNVRWAKGRHE) is interaction with SUPT6H. The 107-residue stretch at 23–129 (GRHETYLCYV…KAEPEGLRRL (107 aa)) folds into the CMP/dCMP-type deaminase domain. The residue at position 27 (Thr-27) is a Phosphothreonine; by PKA. At Ser-38 the chain carries Phosphoserine; by PKA. Residues 39–42 (ATSC) form an important for interaction with CTNNBL1 region. Zn(2+) is bound at residue His-56. Glu-58 (proton donor) is an active-site residue. Residues Cys-87 and Cys-90 each contribute to the Zn(2+) site. The interval 88–116 (YDCARHVAEFLRWNPNLSLRIFTARLYFC) is required for interaction with RNF126. Positions 183–198 (LYEVDDLRDAFRMLGF) match the Nuclear export signal motif.

Belongs to the cytidine and deoxycytidylate deaminase family. Interacts with CTNNBL1; the interaction is important for the immunoglobulin switch activity of AICDA. Interacts (via its NLS) with KPNA1. Interacts with PKA/PRKACA and PRKAR1A/PKR1. Interacts with SUPT6H, TRIM28 and NCL. Directly interacts with MCM3AP/GANP; this interaction may favor AICDA recruitment to immunoglobulin variable region genes, hence promoting somatic hypermutations. It depends on Zn(2+) as a cofactor. In terms of processing, ser-38 is the major site whereas Thr-27 is the minor site of phosphorylation. Phosphorylation regulates its class-switch recombination activity. Post-translationally, probably monoubiquitinated on several residues by RNF126. Expressed in germinal center B-cells (at protein level).

It is found in the nucleus. It localises to the cytoplasm. The enzyme catalyses a 2'-deoxycytidine in single-stranded DNA + H2O + H(+) = a 2'-deoxyuridine in single-stranded DNA + NH4(+). Its function is as follows. Single-stranded DNA-specific cytidine deaminase. Involved in somatic hypermutation (SHM), gene conversion, and class-switch recombination (CSR) in B-lymphocytes by deaminating C to U during transcription of Ig-variable (V) and Ig-switch (S) region DNA. Required for several crucial steps of B-cell terminal differentiation necessary for efficient antibody responses. May also play a role in the epigenetic regulation of gene expression by participating in DNA demethylation. The sequence is that of Single-stranded DNA cytosine deaminase (Aicda) from Mus musculus (Mouse).